A 463-amino-acid chain; its full sequence is Argininosuccinate lyase (463 aa).

Belongs to the lyase 1 family. Argininosuccinate lyase subfamily.

The protein resides in the cytoplasm. It carries out the reaction 2-(N(omega)-L-arginino)succinate = fumarate + L-arginine. It participates in amino-acid biosynthesis; L-arginine biosynthesis; L-arginine from L-ornithine and carbamoyl phosphate: step 3/3. The polypeptide is Argininosuccinate lyase (Methylorubrum extorquens (strain CM4 / NCIMB 13688) (Methylobacterium extorquens)).